A 1410-amino-acid chain; its full sequence is MAITLTNFTFLYMDANLKRLGDIVLGFGANVVTLLLILILTITRRNGRCNRRKSYIEKCLLYVTPALGACLSCVDLVLLVRTNRRREVILCFVPLSGFVMWIAVILSLKFACCACHVFTSQILCFWWIFRFLTDALHLNMIFTLQRVQEICLIMLDIAFGISINVLRIKQAHPKIIPLEDPLIEDDDDQKRIVRRLFLEKNGSWWDLFTFGYIGSIMKHGSVKQLELENLLTLPPEMDPFTCCENLLRCWQLQECNNYSTPSLIWSIYGVYGWPYFRLGLLKVFNDCIGFAGPLLLNRLIKSFLDTQYTFRLSKLKLKLRSSIMSVIYRKCLWVNTANRSGFSEGEIQTFMSVDADRIVNLCNSLHDLWSLPLQIGIALYLLYTQVKFAFLSGLAITILLIPVNKWISVLIASATEKMMKLKDERIRKTGELLTNIRTLKMYGWDNWFADWLKETRATEVTHLATRKYLDAWCVFFWATTPTLFSLCTFGLFALMGHQLDAATVFTCLALFNSLISPLNSFPWVINGLIDAFISTRRVSKFLCCLEHSRDFSIDSGFTSEDLAVCVEDASCTWSSNVEEDYNLTIKQVSLRVPKGSFVAVIGEVGSGKTSLLNSLLGEMRCVHGSILLNGSVAYVPQVPWLLSGTVRENILFGKPFDSKRYFETLSACALDVDISLMVGGDMACIGDKGLNLSGGQRARFALARAVYHGSDMYLLDDVLSAVDSQVGCWILQRALLGPLLNKKTRVMCTHNIQAISCADMIVVMDKGKVNWSGSVTDMPKSISPTFSLTNEFDMSSPNHLTKRKETLSIKEDGVDEISEAAADIVKLEERKEGRVEMMVYRNYAVFSGWFITIVILVSAVLMQGSRNGNDLWLSYWVDKTGKGVSHYSTSFYLMVLCIFCIINSILTLVRAFSFAFGGLKAAVHVHNALISKLINAPTQFFDQTPSGRILNRFSSDLYTIDDSLPFILNILLANFVGLLGIIVVLSYVQVLFLLLLLPFWYIYSKLQVFYRSTSRELRRLDSVSRSPIYASFTETLDGSSTIRAFKSEEHFVGRFIEHLTLYQRTSYSEIIASLWLSLRLQLLGSMIVLFVAVMAVLGSGGNFPISFGTPGLVGLALSYAAPLVSLLGSLLTSFTETEKEMVSVERVLQYMDVPQEEVSGPQSLSDKWPVHGLVEFHNVTMRYISTLPPALTQISFTIQGGMHVGVIGRTGAGKSSILNALFRLTPVCSGEILVDGKNISHLPIRELRSCLAVVPQSPFLFQGSLRDNLDPLGLSEDWRIWEILDKCKVKAAVESVGGLDSYVKESGCSFSVGQRQLLCLARALLKSSKILCLDECTANIDVHTASLLHNTISSECKGVTVITIAHRISTVVDLDSILILDRGILVEQGKPQHLLQDDSSTFSSFVRASQ.

The next 8 helical transmembrane spans lie at 23-43, 60-80, 88-108, 122-142, 148-168, 391-411, 474-494, and 505-525; these read IVLG…LTIT, LLYV…VLLV, VILC…ILSL, ILCF…NMIF, QEIC…VLRI, LSGL…SVLI, VFFW…LFAL, and FTCL…PWVI. An ABC transmembrane type-1 1 domain is found at 255 to 530; the sequence is CNNYSTPSLI…FPWVINGLID (276 aa). The 228-residue stretch at 564–791 folds into the ABC transporter 1 domain; sequence VCVEDASCTW…ISPTFSLTNE (228 aa). Residue 602–609 coordinates ATP; that stretch reads GEVGSGKT. The next 6 helical transmembrane spans lie at 844 to 864, 889 to 909, 963 to 985, 990 to 1009, 1087 to 1107, and 1111 to 1131; these read AVFS…LMQG, TSFY…LTLV, SLPF…IVVL, VLFL…LQVF, IVLF…PISF, and GLVG…GSLL. Positions 852–1139 constitute an ABC transmembrane type-1 2 domain; the sequence is TIVILVSAVL…LLTSFTETEK (288 aa). One can recognise an ABC transporter 2 domain in the interval 1174–1407; the sequence is VEFHNVTMRY…DSSTFSSFVR (234 aa). 1208 to 1215 serves as a coordination point for ATP; the sequence is GRTGAGKS.

This sequence belongs to the ABC transporter superfamily. ABCC family. Conjugate transporter (TC 3.A.1.208) subfamily. Ubiquitous.

It localises to the membrane. It carries out the reaction ATP + H2O + xenobioticSide 1 = ADP + phosphate + xenobioticSide 2.. Pump for glutathione S-conjugates. The chain is ABC transporter C family member 13 (ABCC13) from Arabidopsis thaliana (Mouse-ear cress).